The following is a 304-amino-acid chain: Type II methyltransferase M.ScaI (304 aa).

Belongs to the N(4)/N(6)-methyltransferase family. N(4) subfamily.

The catalysed reaction is a 2'-deoxycytidine in DNA + S-adenosyl-L-methionine = an N(4)-methyl-2'-deoxycytidine in DNA + S-adenosyl-L-homocysteine + H(+). In terms of biological role, a methylase that recognizes the double-stranded sequence 5'-AGTACT-3', methylates C-5 on both strands, and protects the DNA from cleavage by the ScaI endonuclease. The sequence is that of Type II methyltransferase M.ScaI from Streptomyces caespitosus.